The sequence spans 64 residues: Micrurotoxin 1 (64 aa).

5 cysteine pairs are disulfide-bonded: Cys-3–Cys-24, Cys-6–Cys-11, Cys-17–Cys-41, Cys-45–Cys-57, and Cys-58–Cys-63.

The protein belongs to the three-finger toxin family. Ancestral subfamily. Expressed by the venom gland.

It is found in the secreted. Its function is as follows. Allosteric modulator of the GABA(A) receptor (GABR), possibly increasing receptor affinity for the agonist, thus enhancing receptor opening and macroscopic desensitization. In vivo, intracerebroventricular injection into mice results in periods of reduced basal activity, followed by bursts of intense seizures and death. This is Micrurotoxin 1 from Micrurus mipartitus (Red-tailed coral snake).